Here is a 294-residue protein sequence, read N- to C-terminus: Flagellin B1 (294 aa).

A propeptide spanning residues 1-8 is cleaved from the precursor; sequence MKTRTRKG.

It belongs to the archaeal flagellin family.

The protein localises to the archaeal flagellum. Its function is as follows. Flagellin is the subunit protein which polymerizes to form the filaments of archaeal flagella. This is Flagellin B1 (flaB1) from Thermococcus kodakarensis (strain ATCC BAA-918 / JCM 12380 / KOD1) (Pyrococcus kodakaraensis (strain KOD1)).